The following is a 438-amino-acid chain: Methylenetetrahydrofolate--tRNA-(uracil-5-)-methyltransferase TrmFO (438 aa).

9–14 is a binding site for FAD; sequence GGGLAG.

Belongs to the MnmG family. TrmFO subfamily. Requires FAD as cofactor.

Its subcellular location is the cytoplasm. The enzyme catalyses uridine(54) in tRNA + (6R)-5,10-methylene-5,6,7,8-tetrahydrofolate + NADH + H(+) = 5-methyluridine(54) in tRNA + (6S)-5,6,7,8-tetrahydrofolate + NAD(+). It catalyses the reaction uridine(54) in tRNA + (6R)-5,10-methylene-5,6,7,8-tetrahydrofolate + NADPH + H(+) = 5-methyluridine(54) in tRNA + (6S)-5,6,7,8-tetrahydrofolate + NADP(+). Functionally, catalyzes the folate-dependent formation of 5-methyl-uridine at position 54 (M-5-U54) in all tRNAs. In Lactobacillus gasseri (strain ATCC 33323 / DSM 20243 / BCRC 14619 / CIP 102991 / JCM 1131 / KCTC 3163 / NCIMB 11718 / NCTC 13722 / AM63), this protein is Methylenetetrahydrofolate--tRNA-(uracil-5-)-methyltransferase TrmFO.